The primary structure comprises 89 residues: Toxin To14 (89 aa).

The signal sequence occupies residues 1 to 19 (MNCLMLIFVVFLLAFGVEC). Residues 21-85 (KDDYPVDTAK…SPTKTSGRCN (65 aa)) form the LCN-type CS-alpha/beta domain. Disulfide bonds link Cys-33–Cys-84, Cys-37–Cys-60, Cys-46–Cys-67, and Cys-50–Cys-69.

As to expression, expressed by the venom gland.

It is found in the secreted. Its function is as follows. Inhibits voltage-gated sodium channels (Nav). This Tityus obscurus (Amazonian scorpion) protein is Toxin To14.